We begin with the raw amino-acid sequence, 502 residues long: Glycerol kinase (502 aa).

Residue Thr13 coordinates ADP. 3 residues coordinate ATP: Thr13, Thr14, and Ser15. Thr13 provides a ligand contact to sn-glycerol 3-phosphate. Arg17 contributes to the ADP binding site. Residues Arg83, Glu84, Tyr136, and Asp246 each contribute to the sn-glycerol 3-phosphate site. Residues Arg83, Glu84, Tyr136, Asp246, and Gln247 each contribute to the glycerol site. 2 residues coordinate ADP: Thr268 and Gly311. ATP contacts are provided by Thr268, Gly311, Gln315, and Gly412. ADP-binding residues include Gly412 and Asn416.

Belongs to the FGGY kinase family.

The enzyme catalyses glycerol + ATP = sn-glycerol 3-phosphate + ADP + H(+). Its pathway is polyol metabolism; glycerol degradation via glycerol kinase pathway; sn-glycerol 3-phosphate from glycerol: step 1/1. With respect to regulation, inhibited by fructose 1,6-bisphosphate (FBP). Its function is as follows. Key enzyme in the regulation of glycerol uptake and metabolism. Catalyzes the phosphorylation of glycerol to yield sn-glycerol 3-phosphate. The sequence is that of Glycerol kinase from Francisella tularensis subsp. holarctica (strain FTNF002-00 / FTA).